Here is a 242-residue protein sequence, read N- to C-terminus: DNA repair protein RecO (242 aa).

The protein belongs to the RecO family.

Functionally, involved in DNA repair and RecF pathway recombination. This Xanthobacter autotrophicus (strain ATCC BAA-1158 / Py2) protein is DNA repair protein RecO.